The sequence spans 175 residues: Cuticle protein 16.5, isoform A (175 aa).

Tandem repeats lie at residues 17-20, 25-28, 31-34, 38-41, 44-47, 51-54, 57-60, 64-67, 70-73, 77-80, 83-86, 91-94, 99-102, 106-109, 134-137, 144-147, 151-154, 158-161, and 165-168.

Its function is as follows. Component of the cuticle of migratory locust which contains more than 100 different structural proteins. This Locusta migratoria (Migratory locust) protein is Cuticle protein 16.5, isoform A.